We begin with the raw amino-acid sequence, 192 residues long: Phosphoheptose isomerase (192 aa).

The SIS domain occupies 35–192 (LIETLENQGK…CIERHFANKN (158 aa)). 50–52 (NGG) contacts substrate. Positions 59 and 63 each coordinate Zn(2+). Residues glutamate 63, 92 to 93 (ND), 118 to 120 (STS), serine 123, and glutamine 170 contribute to the substrate site. 2 residues coordinate Zn(2+): glutamine 170 and histidine 178.

It belongs to the SIS family. GmhA subfamily. As to quaternary structure, homotetramer. The cofactor is Zn(2+).

It is found in the cytoplasm. The enzyme catalyses 2 D-sedoheptulose 7-phosphate = D-glycero-alpha-D-manno-heptose 7-phosphate + D-glycero-beta-D-manno-heptose 7-phosphate. It functions in the pathway carbohydrate biosynthesis; D-glycero-D-manno-heptose 7-phosphate biosynthesis; D-glycero-alpha-D-manno-heptose 7-phosphate and D-glycero-beta-D-manno-heptose 7-phosphate from sedoheptulose 7-phosphate: step 1/1. Catalyzes the isomerization of sedoheptulose 7-phosphate in D-glycero-D-manno-heptose 7-phosphate. In Helicobacter pylori (strain Shi470), this protein is Phosphoheptose isomerase.